Consider the following 489-residue polypeptide: Kynureninase 2 (489 aa).

The segment covering 1–12 has biased composition (polar residues); that stretch reads MDASAAISQLRQ. A disordered region spans residues 1 to 25; that stretch reads MDASAAISQLRQGQKPEWPQNANTS. Pyridoxal 5'-phosphate is bound by residues leucine 149, threonine 150, 177–180, aspartate 261, histidine 264, and tyrosine 286; that span reads FPSD. Lysine 287 is modified (N6-(pyridoxal phosphate)lysine). Residues tryptophan 317 and asparagine 345 each coordinate pyridoxal 5'-phosphate.

The protein belongs to the kynureninase family. In terms of assembly, homodimer. Pyridoxal 5'-phosphate serves as cofactor.

It localises to the cytoplasm. It catalyses the reaction L-kynurenine + H2O = anthranilate + L-alanine + H(+). The enzyme catalyses 3-hydroxy-L-kynurenine + H2O = 3-hydroxyanthranilate + L-alanine + H(+). The protein operates within amino-acid degradation; L-kynurenine degradation; L-alanine and anthranilate from L-kynurenine: step 1/1. It participates in cofactor biosynthesis; NAD(+) biosynthesis; quinolinate from L-kynurenine: step 2/3. Catalyzes the cleavage of L-kynurenine (L-Kyn) and L-3-hydroxykynurenine (L-3OHKyn) into anthranilic acid (AA) and 3-hydroxyanthranilic acid (3-OHAA), respectively. This Phaeosphaeria nodorum (strain SN15 / ATCC MYA-4574 / FGSC 10173) (Glume blotch fungus) protein is Kynureninase 2.